The sequence spans 501 residues: Cytochrome P450 7A1 (501 aa).

The chain crosses the membrane as a helical span at residues 4-24 (ISLLGGIVTAVCCCLWLLLGM). Cysteine 441 is a binding site for heme.

This sequence belongs to the cytochrome P450 family. Heme is required as a cofactor.

Its subcellular location is the endoplasmic reticulum membrane. It localises to the microsome membrane. It carries out the reaction cholesterol + reduced [NADPH--hemoprotein reductase] + O2 = 7alpha-hydroxycholesterol + oxidized [NADPH--hemoprotein reductase] + H2O + H(+). The enzyme catalyses 4beta-hydroxycholesterol + reduced [NADPH--hemoprotein reductase] + O2 = 4beta,7alpha-dihydroxycholesterol + oxidized [NADPH--hemoprotein reductase] + H2O + H(+). It catalyses the reaction lathosterol + reduced [NADPH--hemoprotein reductase] + O2 = 7alpha,8alpha-epoxy-5alpha-cholestan-3beta-ol + oxidized [NADPH--hemoprotein reductase] + H2O + H(+). The catalysed reaction is lathosterol + reduced [NADPH--hemoprotein reductase] + O2 = 5alpha-cholestan-7-oxo-3beta-ol + oxidized [NADPH--hemoprotein reductase] + H2O + H(+). It carries out the reaction 7-dehydrocholesterol + reduced [NADPH--hemoprotein reductase] + O2 = 7-oxocholesterol + oxidized [NADPH--hemoprotein reductase] + H2O + H(+). The enzyme catalyses (24S)-hydroxycholesterol + reduced [NADPH--hemoprotein reductase] + O2 = (24S)-7alpha-dihydroxycholesterol + oxidized [NADPH--hemoprotein reductase] + H2O + H(+). It catalyses the reaction (24R)-hydroxycholesterol + reduced [NADPH--hemoprotein reductase] + O2 = (24R)-7alpha-dihydroxycholesterol + oxidized [NADPH--hemoprotein reductase] + H2O + H(+). The protein operates within lipid metabolism; bile acid biosynthesis. Its pathway is steroid metabolism; cholesterol degradation. Its function is as follows. A cytochrome P450 monooxygenase involved in the metabolism of endogenous cholesterol and its oxygenated derivatives (oxysterols). Mechanistically, uses molecular oxygen inserting one oxygen atom into a substrate, and reducing the second into a water molecule, with two electrons provided by NADPH via cytochrome P450 reductase (CPR; NADPH-ferrihemoprotein reductase). Functions as a critical regulatory enzyme of bile acid biosynthesis and cholesterol homeostasis. Catalyzes the hydroxylation of carbon hydrogen bond at 7-alpha position of cholesterol, a rate-limiting step in cholesterol catabolism and bile acid biosynthesis. 7-alpha hydroxylates several oxysterols, including 4beta-hydroxycholesterol and 24-hydroxycholesterol. Catalyzes the oxidation of the 7,8 double bond of 7-dehydrocholesterol and lathosterol with direct and predominant formation of the 7-keto derivatives. The sequence is that of Cytochrome P450 7A1 (CYP7A1) from Sus scrofa (Pig).